Here is a 445-residue protein sequence, read N- to C-terminus: Argininosuccinate synthase (445 aa).

Residues 17–25 and A43 each bind ATP; that span reads AFSGGLDTS. Y99 provides a ligand contact to L-citrulline. Residues G129 and T131 each contribute to the ATP site. T131, N135, and D136 together coordinate L-aspartate. Residue N135 coordinates L-citrulline. D136 contacts ATP. R139 and S192 together coordinate L-citrulline. An ATP-binding site is contributed by D194. 3 residues coordinate L-citrulline: T201, E203, and E280.

The protein belongs to the argininosuccinate synthase family. Type 2 subfamily. In terms of assembly, homotetramer.

The protein resides in the cytoplasm. The enzyme catalyses L-citrulline + L-aspartate + ATP = 2-(N(omega)-L-arginino)succinate + AMP + diphosphate + H(+). It functions in the pathway amino-acid biosynthesis; L-arginine biosynthesis; L-arginine from L-ornithine and carbamoyl phosphate: step 2/3. This chain is Argininosuccinate synthase, found in Gemmatimonas aurantiaca (strain DSM 14586 / JCM 11422 / NBRC 100505 / T-27).